Consider the following 111-residue polypeptide: Transcription factor S (111 aa).

8 residues coordinate Zn(2+): cysteine 4, cysteine 7, cysteine 24, cysteine 27, cysteine 72, cysteine 75, cysteine 100, and cysteine 103. The segment at cysteine 4–cysteine 27 adopts a C4-type zinc-finger fold. Residues arginine 68–arginine 108 form a TFIIS-type zinc finger.

The protein belongs to the archaeal RpoM/eukaryotic RPA12/RPB9/RPC11 RNA polymerase family.

Induces RNA cleavage activity in the RNA polymerase. In its presence, the cleavage activity of the RNA polymerase truncates the RNA back to position +15 in a stepwise manner by releasing mainly dinucleotides from the 3'-end of the nascent RNA. The truncated RNAs are able to continue elongation. Involved in transcriptional proofreading and fidelity. Misincorporation of nucleotides during elongation of transcription leads to arrested elongation complexes which are rescued by TFS-promoted removal of a dinucleotide from the 3'-end. TFS is able to induce a cleavage resynthesis cycle in stalled elongation complexes (resulting from the next missing nucleotide or a reduced incorporation rate of a wrong nucleotide) preventing misincorporation and enabling proofreading in a post-incorporation manner. Pausing of elongation complexes is the main determinant of TFS-induced RNA cleavage. This chain is Transcription factor S, found in Sulfolobus acidocaldarius (strain ATCC 33909 / DSM 639 / JCM 8929 / NBRC 15157 / NCIMB 11770).